The following is a 308-amino-acid chain: HPr kinase/phosphorylase (308 aa).

Catalysis depends on residues histidine 138 and lysine 159. 153 to 160 lines the ATP pocket; that stretch reads GESGLGKS. Serine 160 is a binding site for Mg(2+). Aspartate 177 (proton acceptor; for phosphorylation activity. Proton donor; for dephosphorylation activity) is an active-site residue. The important for the catalytic mechanism of both phosphorylation and dephosphorylation stretch occupies residues 201–210; sequence LEVRGLGLLD. Glutamate 202 is a binding site for Mg(2+). Arginine 243 is an active-site residue. The interval 264–269 is important for the catalytic mechanism of dephosphorylation; that stretch reads QVAAGR.

It belongs to the HPrK/P family. In terms of assembly, homohexamer. Mg(2+) is required as a cofactor.

It carries out the reaction [HPr protein]-L-serine + ATP = [HPr protein]-O-phospho-L-serine + ADP + H(+). The enzyme catalyses [HPr protein]-O-phospho-L-serine + phosphate + H(+) = [HPr protein]-L-serine + diphosphate. Catalyzes the ATP- as well as the pyrophosphate-dependent phosphorylation of a specific serine residue in HPr, a phosphocarrier protein of the phosphoenolpyruvate-dependent sugar phosphotransferase system (PTS). HprK/P also catalyzes the pyrophosphate-producing, inorganic phosphate-dependent dephosphorylation (phosphorolysis) of seryl-phosphorylated HPr (P-Ser-HPr). This is HPr kinase/phosphorylase from Bordetella bronchiseptica (strain ATCC BAA-588 / NCTC 13252 / RB50) (Alcaligenes bronchisepticus).